A 755-amino-acid polypeptide reads, in one-letter code: Cellulose synthase-like protein B4 (755 aa).

2 helical membrane-spanning segments follow: residues 24–44 and 49–69; these read AVDL…ILHV and TVWI…LLIT. Residues aspartate 136 and aspartate 461 contribute to the active site. 6 helical membrane-spanning segments follow: residues 533-556, 569-589, 615-635, 674-694, 702-722, and 733-753; these read AYLY…LPAY, VYLG…LWEF, LFSV…VFIV, FLPG…CLVG, GSGL…LPFL, and IPFS…VLSV.

This sequence belongs to the glycosyltransferase 2 family. Plant cellulose synthase-like B subfamily.

The protein resides in the golgi apparatus membrane. Thought to be a Golgi-localized beta-glycan synthase that polymerize the backbones of noncellulosic polysaccharides (hemicelluloses) of plant cell wall. The protein is Cellulose synthase-like protein B4 (CSLB4) of Arabidopsis thaliana (Mouse-ear cress).